Reading from the N-terminus, the 277-residue chain is Coiled-coil domain-containing protein 117 (277 aa).

The tract at residues 1–69 (MAALGRPFSG…GRVSIHCRKK (69 aa)) is disordered. The segment covering 26–37 (FAGRAFPPGAAG) has biased composition (low complexity). Residue arginine 47 is modified to Omega-N-methylarginine. Residue serine 52 is modified to Phosphoserine. The span at 58–69 (ARGRVSIHCRKK) shows a compositional bias: basic residues. Residues 139 to 166 (QCEVARRRLQEIEDRIIDEDEEVESDRN) are a coiled coil. The segment at 212-277 (LPELLPEKPK…ATSTEEEMEL (66 aa)) is disordered.

Interacts with CIAO2B; the interaction is direct. Interacts with MMS19; the interaction is indirect.

The protein localises to the cytoplasm. Its subcellular location is the cytoskeleton. It is found in the spindle. The protein resides in the nucleus. Its function is as follows. Facilitates DNA repair, cell cycle progression, and cell proliferation through its interaction with CIAO2B. This chain is Coiled-coil domain-containing protein 117, found in Mus musculus (Mouse).